Consider the following 473-residue polypeptide: Lactate utilization protein B (473 aa).

4Fe-4S ferredoxin-type domains are found at residues 302–332 (GSEF…GHSY) and 351–380 (YDDY…LHDL). [4Fe-4S] cluster-binding residues include cysteine 311, cysteine 314, cysteine 317, cysteine 321, cysteine 364, cysteine 367, and cysteine 371.

This sequence belongs to the LutB/YkgF family.

Its function is as follows. Is involved in L-lactate degradation and allows cells to grow with lactate as the sole carbon source. Has probably a role as an electron transporter during oxidation of L-lactate. This chain is Lactate utilization protein B, found in Bacillus cereus (strain G9842).